The primary structure comprises 113 residues: Transmembrane protein 256 (113 aa).

The first 29 residues, 1–29 (MAGVGAAFRRLGALSGAGALGLASYGAHG), serve as a signal peptide directing secretion. Over 30 to 63 (AQFPDAYGKELFDKANKHHFLHSLALLGVPSCRK) the chain is Extracellular. Position 43 is an N6-acetyllysine (lysine 43). A helical transmembrane segment spans residues 64-84 (PVWAGLLLASGTTLFCTSFYY). Residues 85–92 (QALSGDTS) are Cytoplasmic-facing. Residues 93 to 113 (IQTLGPVGGSLLILGWLALAF) traverse the membrane as a helical segment.

Belongs to the TMEM256 family.

The protein resides in the membrane. This chain is Transmembrane protein 256 (Tmem256), found in Mus musculus (Mouse).